The sequence spans 283 residues: NADPH-dependent 7-cyano-7-deazaguanine reductase (283 aa).

89 to 91 (IES) lines the substrate pocket. Residue 91-92 (SK) coordinates NADPH. The active-site Thioimide intermediate is cysteine 190. Aspartate 197 acts as the Proton donor in catalysis. 229 to 230 (HE) is a binding site for substrate. 258 to 259 (RG) contributes to the NADPH binding site.

It belongs to the GTP cyclohydrolase I family. QueF type 2 subfamily. In terms of assembly, homodimer.

The protein localises to the cytoplasm. The catalysed reaction is 7-aminomethyl-7-carbaguanine + 2 NADP(+) = 7-cyano-7-deazaguanine + 2 NADPH + 3 H(+). Its pathway is tRNA modification; tRNA-queuosine biosynthesis. Functionally, catalyzes the NADPH-dependent reduction of 7-cyano-7-deazaguanine (preQ0) to 7-aminomethyl-7-deazaguanine (preQ1). The protein is NADPH-dependent 7-cyano-7-deazaguanine reductase of Aromatoleum aromaticum (strain DSM 19018 / LMG 30748 / EbN1) (Azoarcus sp. (strain EbN1)).